The sequence spans 460 residues: Histidinol dehydrogenase (460 aa).

Substrate is bound by residues S269, Q291, and H294. 2 residues coordinate Zn(2+): Q291 and H294. Active-site proton acceptor residues include E358 and H359. Positions 359, 392, 446, and 451 each coordinate substrate. Position 392 (D392) interacts with Zn(2+). H451 contributes to the Zn(2+) binding site.

Belongs to the histidinol dehydrogenase family. Requires Zn(2+) as cofactor.

It catalyses the reaction L-histidinol + 2 NAD(+) + H2O = L-histidine + 2 NADH + 3 H(+). It participates in amino-acid biosynthesis; L-histidine biosynthesis; L-histidine from 5-phospho-alpha-D-ribose 1-diphosphate: step 9/9. Its function is as follows. Catalyzes the sequential NAD-dependent oxidations of L-histidinol to L-histidinaldehyde and then to L-histidine. The protein is Histidinol dehydrogenase of Rhodopirellula baltica (strain DSM 10527 / NCIMB 13988 / SH1).